Here is a 747-residue protein sequence, read N- to C-terminus: 3',5'-cyclic-AMP phosphodiesterase 4D (747 aa).

Positions 1–28 (MERDTCDVLSRSKSASEETLHSCNEEED) are disordered. Residues 14–24 (SASEETLHSCN) are compositionally biased toward basic and acidic residues. Phosphoserine is present on residues Ser238, Ser240, Ser287, and Ser314. The disordered stretch occupies residues 282 to 302 (EVEIPSPTQKEKEKKKRPMSQ). One can recognise a PDEase domain in the interval 325 to 654 (VKTEQEDVLA…EWYQSTIPQS (330 aa)). A Glycyl lysine isopeptide (Lys-Gly) (interchain with G-Cter in SUMO) cross-link involves residue Lys326. The active-site Proton donor is His401. Position 401 (His401) interacts with 3',5'-cyclic AMP. His401 contacts AMP. Zn(2+) contacts are provided by His405, His441, Asp442, and Asp559. The AMP site is built by Asp442, Asp559, Asn562, Gln610, and Phe613. Asp442 lines the Mg(2+) pocket. Mn(2+) is bound at residue Asp442. Gln610 and Phe613 together coordinate 3',5'-cyclic AMP. Residues 649–747 (STIPQSPSPA…CVPDDCCPDT (99 aa)) are disordered. Residues 701–712 (CSDSKTLCTQDS) are compositionally biased toward polar residues. The segment covering 718 to 734 (PLDEQVEEEAVAEEESQ) has biased composition (acidic residues).

It belongs to the cyclic nucleotide phosphodiesterase family. PDE4 subfamily. Homodimer for the long isoforms. Isoforms with truncated N-termini are monomeric. Binds ARRB2. Interacts with PDE4DIP. Identified in a complex composed of RYR1, PDE4D, PKA, FKBP1A and protein phosphatase 1 (PP1). Interacts (via N-terminal region) with SHANK2 (via proline-rich region); the interaction is increased in a PKA-dependent manner. Zn(2+) is required as a cofactor. The cofactor is Mg(2+). Requires Mn(2+) as cofactor. Post-translationally, sumoylation of long isoforms by PIAS4 augments their activation by PKA phosphorylation and represses their inhibition by ERK phosphorylation. In terms of tissue distribution, expressed in brain (at protein level). Isoform 7 is detected in heart, brain, lung, kidney and testis.

It localises to the cytoplasm. The protein resides in the membrane. It is found in the cytoskeleton. The protein localises to the microtubule organizing center. Its subcellular location is the centrosome. It localises to the apical cell membrane. The catalysed reaction is 3',5'-cyclic AMP + H2O = AMP + H(+). It participates in purine metabolism; 3',5'-cyclic AMP degradation; AMP from 3',5'-cyclic AMP: step 1/1. Its activity is regulated as follows. Inhibited by rolipram. Activated by phosphatidic acid. Hydrolyzes the second messenger cAMP, which is a key regulator of many important physiological processes. The protein is 3',5'-cyclic-AMP phosphodiesterase 4D (Pde4d) of Mus musculus (Mouse).